The chain runs to 359 residues: RuBisCO accumulation factor 1 (359 aa).

An N-terminal alpha-helix region spans residues 12–195 (LSPEETDALF…RQKIEQLLSD (184 aa)). The tract at residues 219–345 (PLLIPVAGSL…VLLVMRPKKI (127 aa)) is C-terminal beta-sheet.

This sequence belongs to the RAF family. Homodimer. Forms an RbcL(8)-Raf1(8) complex. Forms complexes of many stoichiometries with RbcL with and without RbcS. RbcX and Raf1 can bind simultaneously to RbcL.

The protein localises to the cytoplasm. Its function is as follows. A major RuBisCO chaperone. Acts after GroEL-GroES chaperonin to fold and/or assemble the large subunit of RuBisCO (ccbL, rbcL). Cooperates with RbcX in RbcL folding, plays the major role in assembly of dimers into RbcL(8)-Raf1(8) intermediate complexes. RbcS replaces Raf1, leading to holoenzyme formation. Functionally, raf1 and RbcX are probably functionally redundant; it has been suggested they may cooperate. The chain is RuBisCO accumulation factor 1 from Picosynechococcus sp. (strain ATCC 27264 / PCC 7002 / PR-6) (Agmenellum quadruplicatum).